The following is a 310-amino-acid chain: Probable L,D-transpeptidase ErfK/SrfK (310 aa).

The signal sequence occupies residues 1–21; that stretch reads MRRVNILCSFALLFASHTSLA. The 136-residue stretch at 96–231 folds into the L,D-TPase catalytic domain; the sequence is KGIVVNVAEM…VPVGTRVQII (136 aa). Histidine 191 (proton donor/acceptor) is an active-site residue. Cysteine 207 acts as the Nucleophile in catalysis.

The protein belongs to the YkuD family. As to quaternary structure, interacts with DsbG.

Its subcellular location is the periplasm. It functions in the pathway cell wall biogenesis; peptidoglycan biosynthesis. In terms of biological role, responsible, at least in part, for anchoring of the major outer membrane lipoprotein (Lpp, also known as the Braun lipoprotein) to the peptidoglycan via a meso-diaminopimelyl-L-Lys- bond on the terminal residue of Lpp. In Escherichia coli (strain K12), this protein is Probable L,D-transpeptidase ErfK/SrfK (erfK).